A 402-amino-acid chain; its full sequence is MDYKQLKQEFNTPFYIYNFDFIKERFLNLKEAFKARKSQIFYAVKANSNLSLLQMLANLDSGFDCVSIGEVKRALKAGAKAYKIIFSGVGKTKEELRQALEYDILYINLESEAEMMLLESVAKELNLKARISIRVNPNVDAKTHPYISTGLNENKFGVEIDIARKMYLYAKNSSFLEPVGVHFHIGSQLLDISPIHEAAAIVAKLVRELKALQIDLKFFDIGGGLGVAYEKNECEPDLYDYAQGILAQLHGLDLTIGMEPGRYLVAKSGEFVCSVLYEKQNKTKRFVVVDGAMNDLIRPSLYEAYHEIILPYNQGEESLCDVVGGICESGDFFAKARSLPSTQSDDIMVIKNTGAYGFSMSSNYNTRNKVCELALEEGQVRLIRQRENFEDQIALEEKFLKA.

The residue at position 45 (Lys45) is an N6-(pyridoxal phosphate)lysine. Pyridoxal 5'-phosphate is bound by residues Gly224 and 259–262 (EPGR). 3 residues coordinate substrate: Arg262, Arg298, and Tyr302. Catalysis depends on Cys327, which acts as the Proton donor. Substrate is bound by residues Glu328 and Tyr356. Tyr356 contributes to the pyridoxal 5'-phosphate binding site.

This sequence belongs to the Orn/Lys/Arg decarboxylase class-II family. LysA subfamily. As to quaternary structure, homodimer. Pyridoxal 5'-phosphate serves as cofactor.

The enzyme catalyses meso-2,6-diaminopimelate + H(+) = L-lysine + CO2. Its pathway is amino-acid biosynthesis; L-lysine biosynthesis via DAP pathway; L-lysine from DL-2,6-diaminopimelate: step 1/1. In terms of biological role, specifically catalyzes the decarboxylation of meso-diaminopimelate (meso-DAP) to L-lysine. The protein is Diaminopimelate decarboxylase of Campylobacter jejuni subsp. jejuni serotype O:2 (strain ATCC 700819 / NCTC 11168).